Here is a 337-residue protein sequence, read N- to C-terminus: ATP-dependent 6-phosphofructokinase (337 aa).

Gly-11 provides a ligand contact to ATP. 21–25 serves as a coordination point for ADP; it reads RAVVR. Residues 72–73 and 102–105 each bind ATP; these read RY and GDGS. Mg(2+) is bound at residue Asp-103. Residue 125–127 participates in substrate binding; the sequence is TID. Asp-127 (proton acceptor) is an active-site residue. Arg-154 contacts ADP. Residues Arg-162 and 169–171 contribute to the substrate site; that span reads MGR. Residues 185–187, Arg-212, and 214–216 each bind ADP; these read GAD and KNH. Residues Glu-223, Arg-245, and 251–254 contribute to the substrate site; that span reads HILR.

The protein belongs to the phosphofructokinase type A (PFKA) family. ATP-dependent PFK group I subfamily. Prokaryotic clade 'B1' sub-subfamily. As to quaternary structure, homotetramer. It depends on Mg(2+) as a cofactor.

The protein resides in the cytoplasm. The enzyme catalyses beta-D-fructose 6-phosphate + ATP = beta-D-fructose 1,6-bisphosphate + ADP + H(+). Its pathway is carbohydrate degradation; glycolysis; D-glyceraldehyde 3-phosphate and glycerone phosphate from D-glucose: step 3/4. Its activity is regulated as follows. Allosterically activated by ADP and other diphosphonucleosides, and allosterically inhibited by phosphoenolpyruvate. Catalyzes the phosphorylation of D-fructose 6-phosphate to fructose 1,6-bisphosphate by ATP, the first committing step of glycolysis. The polypeptide is ATP-dependent 6-phosphofructokinase (Streptococcus equi subsp. equi (strain 4047)).